The sequence spans 186 residues: Putative 3-methyladenine DNA glycosylase (186 aa).

The protein belongs to the DNA glycosylase MPG family.

The sequence is that of Putative 3-methyladenine DNA glycosylase from Borreliella afzelii (strain PKo) (Borrelia afzelii).